The chain runs to 276 residues: Putative ankyrin repeat protein R838 (276 aa).

ANK repeat units lie at residues 134–163 (DGDNALLMAAENGYYEVVTYLINKGCDPRS), 164–193 (DYDYALRSAAEKGHIDVVKLLLEKGADISS), 195–223 (NHWPLSYAALEGKFEMVKFLISRGADVRA), and 225–253 (NYNPIKYALDGGHREIADYMLDLCPEIGS). Positions 254 to 276 (VSDDDTYDSDSSDYSEDDSESIN) are disordered. Residues 255–276 (SDDDTYDSDSSDYSEDDSESIN) are compositionally biased toward acidic residues.

The polypeptide is Putative ankyrin repeat protein R838 (Acanthamoeba polyphaga (Amoeba)).